The following is a 342-amino-acid chain: MKALAKLERGPGLTLTRVKRPEVGHNDVLIKIRRTAICGTDIHIWKWDDWAQKTIPVPMHVGHEYVGEIVEMGQEVRGFAIGDRVSGEGHITCGFCRNCRAGRRHLCRNTVGVGVNREGAFAEYLAIPAFNAFKIPPEISDDLASIFDPFGNATHTALSFNLVGEDVLITGAGPIGIMAVAIAKHVGARNVVITDINDYRLELARKMGATRAVNVARESLRDVMSDLHMTEGFDVGLEMSGVPSAFTSMLEAMNHGGKVALLGIPPAQTAIDWNQVIFKGLEIKGIYGREMFETWYKMVAMLQSGLDLSPIITHRFAADDYEKGFAAMLSGESGKVILDWTA.

Cys-38 serves as a coordination point for Zn(2+). Catalysis depends on charge relay system residues Thr-40 and His-43. The Zn(2+) site is built by His-63, Glu-64, Cys-93, Cys-96, Cys-99, and Cys-107. Residues Ile-175, Asp-195, Arg-200, 262–264, and 286–287 contribute to the NAD(+) site; these read LGI and IY.

It belongs to the zinc-containing alcohol dehydrogenase family. As to quaternary structure, homotetramer. Requires Zn(2+) as cofactor.

Its subcellular location is the cytoplasm. The catalysed reaction is L-threonine + NAD(+) = (2S)-2-amino-3-oxobutanoate + NADH + H(+). It functions in the pathway amino-acid degradation; L-threonine degradation via oxydo-reductase pathway; glycine from L-threonine: step 1/2. Its function is as follows. Catalyzes the NAD(+)-dependent oxidation of L-threonine to 2-amino-3-ketobutyrate. The sequence is that of L-threonine 3-dehydrogenase from Burkholderia lata (strain ATCC 17760 / DSM 23089 / LMG 22485 / NCIMB 9086 / R18194 / 383).